Consider the following 51-residue polypeptide: Large ribosomal subunit protein eL39x (51 aa).

Belongs to the eukaryotic ribosomal protein eL39 family.

The chain is Large ribosomal subunit protein eL39x (RPL39C) from Oryza sativa subsp. japonica (Rice).